Reading from the N-terminus, the 92-residue chain is Small ribosomal subunit protein uS19c (92 aa).

Belongs to the universal ribosomal protein uS19 family.

Its subcellular location is the plastid. It is found in the chloroplast. In terms of biological role, protein S19 forms a complex with S13 that binds strongly to the 16S ribosomal RNA. This is Small ribosomal subunit protein uS19c from Panax ginseng (Korean ginseng).